We begin with the raw amino-acid sequence, 90 residues long: Probable Fe(2+)-trafficking protein (90 aa).

Belongs to the Fe(2+)-trafficking protein family.

Could be a mediator in iron transactions between iron acquisition and iron-requiring processes, such as synthesis and/or repair of Fe-S clusters in biosynthetic enzymes. In Aliivibrio fischeri (strain ATCC 700601 / ES114) (Vibrio fischeri), this protein is Probable Fe(2+)-trafficking protein.